An 832-amino-acid chain; its full sequence is Translation initiation factor IF-2 (832 aa).

The tract at residues 1–249 (MSDDNDKPRT…GGGSSAPREK (249 aa)) is disordered. Residues 53–71 (TPAPAPEPAPEPAPAPAPA) are compositionally biased toward pro residues. Residues 89–144 (PQERVARLQREAEEERLKLAEDARKRDDQKAKQNADDEKKRQEENKKAEEEAEKQA) are compositionally biased toward basic and acidic residues. Residues 145–156 (AAEAEAAAAAEA) are compositionally biased toward low complexity. A compositionally biased stretch (basic and acidic residues) spans 180 to 200 (PEPKRPEKKKEEKKPARGGAK). The tr-type G domain maps to 333 to 503 (PRPPVVTIMG…ELQAELLELK (171 aa)). Residues 342-349 (GHVDHGKT) are G1. 342 to 349 (GHVDHGKT) contributes to the GTP binding site. The G2 stretch occupies residues 367-371 (GITQH). A G3 region spans residues 389 to 392 (DTPG). GTP-binding positions include 389-393 (DTPGH) and 443-446 (NKCD). The tract at residues 443–446 (NKCD) is G4. Residues 479 to 481 (SAT) are G5.

It belongs to the TRAFAC class translation factor GTPase superfamily. Classic translation factor GTPase family. IF-2 subfamily.

Its subcellular location is the cytoplasm. One of the essential components for the initiation of protein synthesis. Protects formylmethionyl-tRNA from spontaneous hydrolysis and promotes its binding to the 30S ribosomal subunits. Also involved in the hydrolysis of GTP during the formation of the 70S ribosomal complex. This is Translation initiation factor IF-2 from Erythrobacter litoralis (strain HTCC2594).